We begin with the raw amino-acid sequence, 315 residues long: Probable serine acetyltransferase 4 (315 aa).

The interval 287-315 (AKPIIGKKAAPQRRPEELPGVTMEQRWSD) is disordered.

Belongs to the transferase hexapeptide repeat family. As to quaternary structure, homomultimer.

It carries out the reaction L-serine + acetyl-CoA = O-acetyl-L-serine + CoA. It participates in amino-acid biosynthesis; L-cysteine biosynthesis; L-cysteine from L-serine: step 1/2. This chain is Probable serine acetyltransferase 4 (SAT4), found in Oryza sativa subsp. japonica (Rice).